Here is an 852-residue protein sequence, read N- to C-terminus: Eukaryotic translation initiation factor 3 subunit C (852 aa).

The segment at Met1–Lys90 is disordered. A compositionally biased stretch (acidic residues) spans Ser14–Ser57. Positions Phe597–His772 constitute a PCI domain. The segment covering Thr798–Met809 has biased composition (polar residues). Residues Thr798–Ala852 form a disordered region. Positions Gln810 to Gln822 are enriched in low complexity. Residues Lys823 to Arg835 are compositionally biased toward basic and acidic residues. Residues Val841–Ala852 show a composition bias toward polar residues.

The protein belongs to the eIF-3 subunit C family. In terms of assembly, component of the eukaryotic translation initiation factor 3 (eIF-3) complex.

The protein localises to the cytoplasm. Functionally, component of the eukaryotic translation initiation factor 3 (eIF-3) complex, which is involved in protein synthesis of a specialized repertoire of mRNAs and, together with other initiation factors, stimulates binding of mRNA and methionyl-tRNAi to the 40S ribosome. The eIF-3 complex specifically targets and initiates translation of a subset of mRNAs involved in cell proliferation. This chain is Eukaryotic translation initiation factor 3 subunit C, found in Debaryomyces hansenii (strain ATCC 36239 / CBS 767 / BCRC 21394 / JCM 1990 / NBRC 0083 / IGC 2968) (Yeast).